An 880-amino-acid chain; its full sequence is Phosphoinositide 3-kinase regulatory subunit 5 (880 aa).

M1 carries the post-translational modification N-acetylmethionine. The tract at residues 25–101 (SLSRRSTSWS…TPHFPPDSDL (77 aa)) is heterodimerization. Disordered stretches follow at residues 315 to 339 (GILGDDEEEEEEEEEVEEDLETDGH), 389 to 416 (SGYVEDSEESSSEWPWRRGSQERRGHRR), 454 to 510 (RRAG…SGDE), and 565 to 601 (HGTSPGACPPPRSQTPSPPTDSPRHASPGELGTTPWE). The span at 318–335 (GDDEEEEEEEEEVEEDLE) shows a compositional bias: acidic residues. A phosphoserine mark is found at S458 and S507. Over residues 571–585 (ACPPPRSQTPSPPTD) the composition is skewed to pro residues. The interval 653–753 (PILADMLLYY…WSNLEKVCTS (101 aa)) is interaction with beta-gamma G protein dimers.

Heterodimer of a catalytic subunit (PIK3CG/p120) and a regulatory (PIK3R5a/p101) subunit. Interacts with beta-gamma G protein dimers. As to expression, ubiquitously expressed with high expression in fetal brain compared to adult brain. Abundant expression is observed in cerebellum, cerebral cortex, cerebral meninges, and vermis cerebelli.

The protein localises to the nucleus. It is found in the cytoplasm. Its subcellular location is the cell membrane. With respect to regulation, greatly activated by G gamma proteins. In terms of biological role, regulatory subunit of the PI3K gamma complex. Required for recruitment of the catalytic subunit to the plasma membrane via interaction with beta-gamma G protein dimers. Required for G protein-mediated activation of PIK3CG. This is Phosphoinositide 3-kinase regulatory subunit 5 (PIK3R5) from Homo sapiens (Human).